Reading from the N-terminus, the 186-residue chain is Ribosome rescue factor SmrB (186 aa).

The Smr domain occupies 99–174 (IDLHGLTQHQ…SDAAIIVIIE (76 aa)).

The protein belongs to the SmrB family. Associates with collided ribosomes, but not with correctly translating polysomes.

Acts as a ribosome collision sensor. Detects stalled/collided disomes (pairs of ribosomes where the leading ribosome is stalled and a second ribosome has collided with it) and endonucleolytically cleaves mRNA at the 5' boundary of the stalled ribosome. Stalled/collided disomes form a new interface (primarily via the 30S subunits) that binds SmrB. Cleaved mRNA becomes available for tmRNA ligation, leading to ribosomal subunit dissociation and rescue of stalled ribosomes. The polypeptide is Ribosome rescue factor SmrB (Buchnera aphidicola subsp. Acyrthosiphon pisum (strain 5A)).